Here is a 429-residue protein sequence, read N- to C-terminus: C4-dicarboxylate transport protein (429 aa).

Transmembrane regions (helical) follow at residues 9–29, 45–65, 79–99, 149–169, 185–205, 223–243, 308–328, and 356–376; these read VLYVQVIFAIIVGVILGHFYP, LIKMVIGPIIFCTVVTGIAGM, LLYFEVVSTFALLLGLAATHI, GEILQILLIALLFGSVLAHLG, VLFGIVHIVTKLAPIGAFGAM, LIGTFYLTSIVFVLVVLGTIA, IYMTMAVLFIAQATNIELTWM, and AATLAVVPTIPLSGMVLILGI.

The protein belongs to the dicarboxylate/amino acid:cation symporter (DAACS) (TC 2.A.23) family.

It localises to the cell inner membrane. Responsible for the transport of dicarboxylates such as succinate, fumarate, and malate from the periplasm across the membrane. This chain is C4-dicarboxylate transport protein, found in Burkholderia ambifaria (strain ATCC BAA-244 / DSM 16087 / CCUG 44356 / LMG 19182 / AMMD) (Burkholderia cepacia (strain AMMD)).